The chain runs to 422 residues: Probable tRNA pseudouridine synthase D (422 aa).

The Nucleophile role is filled by Asp-83. The TRUD domain occupies 164 to 386; sequence GFPNYFGSQR…AGGRRELLIK (223 aa).

The protein belongs to the pseudouridine synthase TruD family.

The catalysed reaction is uridine(13) in tRNA = pseudouridine(13) in tRNA. Could be responsible for synthesis of pseudouridine from uracil-13 in transfer RNAs. This is Probable tRNA pseudouridine synthase D from Thermococcus sibiricus (strain DSM 12597 / MM 739).